Consider the following 484-residue polypeptide: 3-isopropylmalate dehydratase large subunit (484 aa).

[4Fe-4S] cluster contacts are provided by Cys352, Cys412, and Cys415. Residues 462–484 (GTLSSPSDLDPAPESAAVSSSAA) form a disordered region.

The protein belongs to the aconitase/IPM isomerase family. LeuC type 1 subfamily. In terms of assembly, heterodimer of LeuC and LeuD. It depends on [4Fe-4S] cluster as a cofactor.

It carries out the reaction (2R,3S)-3-isopropylmalate = (2S)-2-isopropylmalate. The protein operates within amino-acid biosynthesis; L-leucine biosynthesis; L-leucine from 3-methyl-2-oxobutanoate: step 2/4. In terms of biological role, catalyzes the isomerization between 2-isopropylmalate and 3-isopropylmalate, via the formation of 2-isopropylmaleate. This Arthrobacter sp. (strain FB24) protein is 3-isopropylmalate dehydratase large subunit.